A 653-amino-acid chain; its full sequence is Sodium-dependent phosphate transporter 2 (653 aa).

Residues 1-5 (MAIDG) lie on the Extracellular side of the membrane. The helical transmembrane segment at 6–26 (YLWMVILGFIIAFILAFSVGA) threads the bilayer. The Cytoplasmic portion of the chain corresponds to 27-46 (NDVANSFGTAVGSGVVTLRQ). A helical membrane pass occupies residues 47-67 (ACILASIFETTGSVLLGAKVG). Topologically, residues 68–86 (ETIRKGIIDVNLYNETVET) are extracellular. Residue asparagine 81 is glycosylated (N-linked (GlcNAc...) asparagine). Residues 87 to 107 (LMAGEVSAMVGSAVWQLIASF) traverse the membrane as a helical segment. Topologically, residues 108–109 (LR) are cytoplasmic. The helical transmembrane segment at 110–130 (LPISGTHCIVGSTIGFSLVAI) threads the bilayer. Topologically, residues 131–142 (GTQGVQWMELVK) are extracellular. A helical transmembrane segment spans residues 143-163 (IVASWFISPLLSGFMSGVLFI). Over 164 to 190 (LIRIFILKKEDPVPNGLRALPVFYAAT) the chain is Cytoplasmic. Residues 191 to 211 (IAINVFSIMYTGAPVLGLVLP) traverse the membrane as a helical segment. Residues 212–213 (IW) lie on the Extracellular side of the membrane. The helical transmembrane segment at 214-234 (AIALISFGVALLFALFVWLFV) threads the bilayer. The Cytoplasmic segment spans residues 235–483 (CPWMRRKIAG…EEKEEKDTAE (249 aa)). 4 positions are modified to phosphoserine: serine 253, serine 256, serine 259, and serine 268. A disordered region spans residues 275-311 (PGAKANDDSTVPLTGSAGEPSGTSEGTSVGNHPRASY). Residues 295–304 (SGTSEGTSVG) are compositionally biased toward polar residues. Serine 316 and serine 385 each carry phosphoserine. Residues 459–478 (SELTDPDQPRDDPAEEEKEE) are disordered. A helical membrane pass occupies residues 484-504 (VHLLFHFLQVLTACFGSFAHG). Topologically, residues 505-531 (GNDVSNAIGPLVALWLIYEQGAVLQEA) are extracellular. Residues 532-552 (VTPVWLLFYGGVGICTGLWVW) traverse the membrane as a helical segment. Residues 553-572 (GRRVIQTMGKDLTPITPSSG) lie on the Cytoplasmic side of the membrane. The helical transmembrane segment at 573 to 587 (FTIELASAFTVVIAS) threads the bilayer. Topologically, residues 588-594 (NVGLPVS) are extracellular. Residues 595 to 610 (TTHCKVGSVVAVGWIR) form a helical membrane-spanning segment. At 611–622 (SRKAVDWRLFRN) the chain is on the cytoplasmic side. The helical transmembrane segment at 623-643 (IFVAWFVTVPVAGLFSAAIMA) threads the bilayer. Residues 644–653 (LLMYGILPYV) lie on the Extracellular side of the membrane.

This sequence belongs to the inorganic phosphate transporter (PiT) (TC 2.A.20) family. In terms of assembly, homodimer.

It is found in the cell membrane. Its subcellular location is the apical cell membrane. It carries out the reaction 2 Na(+)(out) + phosphate(out) = 2 Na(+)(in) + phosphate(in). Its function is as follows. Sodium-phosphate symporter which preferentially transports the monovalent form of phosphate with a stoichiometry of two sodium ions per phosphate ion. Plays a critical role in the determination of bone quality and strength by providing phosphate for bone mineralization. Required to maintain normal cerebrospinal fluid phosphate levels. Mediates phosphate-induced calcification of vascular smooth muscle cells (VCMCs) and can functionally compensate for loss of SLC20A1 in VCMCs. (Microbial infection) Functions as a retroviral receptor for feline leukemia virus subgroup B (FeLV-B). The chain is Sodium-dependent phosphate transporter 2 (SLC20A2) from Felis catus (Cat).